Here is a 420-residue protein sequence, read N- to C-terminus: Putative kinase Y4mE (420 aa).

Asp302 serves as the catalytic Proton acceptor.

This sequence belongs to the HipA Ser/Thr kinase family.

This is Putative kinase Y4mE from Sinorhizobium fredii (strain NBRC 101917 / NGR234).